Here is a 356-residue protein sequence, read N- to C-terminus: MEERDRTGRTGQPQHRINQPSTARERANSVDAYGFQRSDDFDYETHEQLMSEYLAVLTRRSIRWAKLLQGRRRVDRNLKVKRYVRKGVPNEHRPLVWMVCSGAQEQMDRNPGYYQSLLDTHHEPKLEESIRTDLHRTFPDNIYFRKSAEPCLQQALYNVLVAYGHHNKAVGYCQGMNFIAGYLILVSKDEETSFWLMEALLSRILPDYYTPAMLGLKTDQEVLGELVRLKAPAVWKLMQDQGVMWTLVVSRWFICLFIDVLPVETVLRIWDCLFYEGSKILFRVALTLIRHHQQEIAEAQNLPDVCERFKRITRGAFVEDCHTFMQKIFQEPGSLSMATVSKLRESCRARIIADES.

Residues 1 to 29 (MEERDRTGRTGQPQHRINQPSTARERANS) form a disordered region. A compositionally biased stretch (polar residues) spans 9 to 22 (RTGQPQHRINQPST). The region spanning 87-277 (GVPNEHRPLV…RIWDCLFYEG (191 aa)) is the Rab-GAP TBC domain.

May act as a GTPase-activating protein for Rab family protein(s). This is Growth hormone-regulated TBC protein 1-A (grtp1a) from Danio rerio (Zebrafish).